Here is a 77-residue protein sequence, read N- to C-terminus: Conotoxin King-Kong 2 (77 aa).

The signal sequence occupies residues 1 to 22 (MKLTCMMIVAVLFLTAWTFVTA). A propeptide spanning residues 23 to 49 (DDSGNGLENLFSKAHHEMKNPEASNLN) is cleaved from the precursor. Cystine bridges form between Cys52/Cys67, Cys59/Cys71, and Cys66/Cys76. Cys76 is subject to Cysteine amide.

The protein belongs to the conotoxin O1 superfamily. In terms of tissue distribution, expressed by the venom duct.

The protein localises to the secreted. The chain is Conotoxin King-Kong 2 from Conus textile (Cloth-of-gold cone).